Here is an 880-residue protein sequence, read N- to C-terminus: Valine--tRNA ligase (880 aa).

The 'HIGH' region motif lies at 51 to 61; the sequence is PNVTGELHLGH. The 'KMSKS' region signature appears at 529–533; that stretch reads KMSKT. Lysine 532 contributes to the ATP binding site. Positions 815 to 854 form a coiled coil; sequence MSTMVDLEAEAKRVEAEIAELETQIERLSARLSDTQFLAK.

It belongs to the class-I aminoacyl-tRNA synthetase family. ValS type 1 subfamily. In terms of assembly, monomer.

The protein localises to the cytoplasm. The enzyme catalyses tRNA(Val) + L-valine + ATP = L-valyl-tRNA(Val) + AMP + diphosphate. Its function is as follows. Catalyzes the attachment of valine to tRNA(Val). As ValRS can inadvertently accommodate and process structurally similar amino acids such as threonine, to avoid such errors, it has a 'posttransfer' editing activity that hydrolyzes mischarged Thr-tRNA(Val) in a tRNA-dependent manner. This chain is Valine--tRNA ligase, found in Dehalococcoides mccartyi (strain ATCC BAA-2266 / KCTC 15142 / 195) (Dehalococcoides ethenogenes (strain 195)).